Here is a 144-residue protein sequence, read N- to C-terminus: MKKVMTATEIMEMIPNRYPICYIDYVDEIIPNEKIIATKNVTINEEFFQGHFPGNPTMPGVLIIEALAQVGSILILKMDQFEGETAYIGGINKAKFRQKVVPGDVLKLHFEIVKLRDFVGIGKATAYVEDKKVCECELTFIVGR.

The active site involves H51.

It belongs to the thioester dehydratase family. FabZ subfamily.

The protein localises to the cytoplasm. The catalysed reaction is a (3R)-hydroxyacyl-[ACP] = a (2E)-enoyl-[ACP] + H2O. Involved in unsaturated fatty acids biosynthesis. Catalyzes the dehydration of short chain beta-hydroxyacyl-ACPs and long chain saturated and unsaturated beta-hydroxyacyl-ACPs. In Enterococcus faecalis (strain ATCC 700802 / V583), this protein is 3-hydroxyacyl-[acyl-carrier-protein] dehydratase FabZ (fabZ1).